A 181-amino-acid chain; its full sequence is Large ribosomal subunit protein uL5 (181 aa).

It belongs to the universal ribosomal protein uL5 family. As to quaternary structure, part of the 50S ribosomal subunit; part of the 5S rRNA/L5/L18/L25 subcomplex. Contacts the 5S rRNA and the P site tRNA. Forms a bridge to the 30S subunit in the 70S ribosome.

Its function is as follows. This is one of the proteins that bind and probably mediate the attachment of the 5S RNA into the large ribosomal subunit, where it forms part of the central protuberance. In the 70S ribosome it contacts protein S13 of the 30S subunit (bridge B1b), connecting the 2 subunits; this bridge is implicated in subunit movement. Contacts the P site tRNA; the 5S rRNA and some of its associated proteins might help stabilize positioning of ribosome-bound tRNAs. In Helicobacter pylori (strain HPAG1), this protein is Large ribosomal subunit protein uL5.